A 197-amino-acid polypeptide reads, in one-letter code: ATP-dependent Clp protease proteolytic subunit (197 aa).

Serine 98 acts as the Nucleophile in catalysis. Histidine 123 is an active-site residue.

The protein belongs to the peptidase S14 family. As to quaternary structure, fourteen ClpP subunits assemble into 2 heptameric rings which stack back to back to give a disk-like structure with a central cavity, resembling the structure of eukaryotic proteasomes.

The protein resides in the cytoplasm. It carries out the reaction Hydrolysis of proteins to small peptides in the presence of ATP and magnesium. alpha-casein is the usual test substrate. In the absence of ATP, only oligopeptides shorter than five residues are hydrolyzed (such as succinyl-Leu-Tyr-|-NHMec, and Leu-Tyr-Leu-|-Tyr-Trp, in which cleavage of the -Tyr-|-Leu- and -Tyr-|-Trp bonds also occurs).. Functionally, cleaves peptides in various proteins in a process that requires ATP hydrolysis. Has a chymotrypsin-like activity. Plays a major role in the degradation of misfolded proteins. In Anaplasma phagocytophilum (strain HZ), this protein is ATP-dependent Clp protease proteolytic subunit.